The primary structure comprises 372 residues: Delta-type opioid receptor (372 aa).

The Extracellular segment spans residues 1-47; the sequence is MELVPSARAELQSSPLVNLSDAFPSAFPSAGANASGSPGARSASSLA. N18 and N33 each carry an N-linked (GlcNAc...) asparagine glycan. The chain crosses the membrane as a helical span at residues 48 to 75; sequence LAIAITALYSAVCAVGLLGNVLVMFGIV. Residues 76 to 85 are Cytoplasmic-facing; it reads RYTKLKTATN. The chain crosses the membrane as a helical span at residues 86-110; the sequence is IYIFNLALADALATSTLPFQSAKYL. At 111–122 the chain is on the extracellular side; sequence METWPFGELLCK. The cysteines at positions 121 and 198 are disulfide-linked. A helical transmembrane segment spans residues 123 to 144; the sequence is AVLSIDYYNMFTSIFTLTMMSV. The Cytoplasmic portion of the chain corresponds to 145–163; the sequence is DRYIAVCHPVKALDFRTPA. A helical membrane pass occupies residues 164–186; sequence KAKLINICIWVLASGVGVPIMVM. The Extracellular portion of the chain corresponds to 187-206; sequence AVTQPRDGAVVCMLQFPSPS. Residues 207–238 form a helical membrane-spanning segment; that stretch reads WYWDTVTKICVFLFAFVVPILIITVCYGLMLL. The Cytoplasmic portion of the chain corresponds to 239–261; sequence RLRSVRLLSGSKEKDRSLRRITR. A helical membrane pass occupies residues 262–284; that stretch reads MVLVVVGAFVVCWAPIHIFVIVW. The Extracellular portion of the chain corresponds to 285–299; the sequence is TLVDINRRDPLVVAA. Residues 300-321 form a helical membrane-spanning segment; the sequence is LHLCIALGYANSSLNPVLYAFL. Topologically, residues 322–372 are cytoplasmic; sequence DENFKRCFRQLCRTPCGRQEPGSLRRPRQATTRERVTACTPSDGPGGGAAA. C333 is lipidated: S-palmitoyl cysteine. The segment at 340 to 372 is disordered; sequence QEPGSLRRPRQATTRERVTACTPSDGPGGGAAA.

This sequence belongs to the G-protein coupled receptor 1 family. In terms of assembly, may form homooligomers. Forms a heterodimer with OPRM1. Interacts with GPRASP1. Interacts with RTP4; the interaction promotes cell surface localization of the OPRD1-OPRM1 heterodimer. Post-translationally, ubiquitinated. A basal ubiquitination seems not to be related to degradation. Ubiquitination is increased upon formation of OPRM1:OPRD1 oligomers leading to proteasomal degradation; the ubiquitination is diminished by RTP4. Brain, with high concentrations in the basal ganglia and limbic regions.

It is found in the cell membrane. G-protein coupled receptor that functions as a receptor for endogenous enkephalins and for a subset of other opioids. Ligand binding causes a conformation change that triggers signaling via guanine nucleotide-binding proteins (G proteins) and modulates the activity of down-stream effectors, such as adenylate cyclase. Signaling leads to the inhibition of adenylate cyclase activity. Inhibits neurotransmitter release by reducing calcium ion currents and increasing potassium ion conductance. Plays a role in the perception of pain and in opiate-mediated analgesia. Plays a role in developing analgesic tolerance to morphine. In Mus musculus (Mouse), this protein is Delta-type opioid receptor (Oprd1).